Consider the following 124-residue polypeptide: Small ribosomal subunit protein bS6 (124 aa).

Positions E96–A124 are disordered. The segment covering A115 to A124 has biased composition (polar residues).

The protein belongs to the bacterial ribosomal protein bS6 family.

In terms of biological role, binds together with bS18 to 16S ribosomal RNA. This is Small ribosomal subunit protein bS6 from Paraburkholderia phytofirmans (strain DSM 17436 / LMG 22146 / PsJN) (Burkholderia phytofirmans).